The chain runs to 416 residues: ASTRA-associated protein 1 (416 aa).

WD repeat units follow at residues 13–54 (KHET…PFAG), 58–95 (ETKAQIIYIKWLNNYLIVLSKDHTLRFLQLHNETAVAI), 111–147 (VYEVPVNTLNFANVVVTHMRESQYRLWCCNTMDSESI), and 234–273 (HYPEPVLSLCYNEREEVILSSSTNDAIGVHALQAHSVNVS).

It belongs to the WD repeat ASA1 family. As to quaternary structure, component of the ASTRA chromatin remodeling machinery complex.

Its subcellular location is the nucleus. Component of the ASTRA complex involved in chromatin remodeling. This Lachancea thermotolerans (strain ATCC 56472 / CBS 6340 / NRRL Y-8284) (Yeast) protein is ASTRA-associated protein 1 (ASA1).